An 837-amino-acid chain; its full sequence is V-type proton ATPase 116 kDa subunit a 1 (837 aa).

At 1-388 (MGELFRSEEM…DAYGIGSYRE (388 aa)) the chain is on the cytoplasmic side. The helical transmembrane segment at 389–407 (INPAPYTIITFPFLFAVMF) threads the bilayer. At 408–409 (GD) the chain is on the vacuolar side. Residues 410-426 (FGHGILMTLFAVWMVVR) traverse the membrane as a helical segment. Residues 427–441 (ESRILSQKIDNELFT) are Cytoplasmic-facing. A helical membrane pass occupies residues 442–471 (MMFSGRYIILLMGLFSIYTGLIYNDCFSKA). At 472-534 (LNLFGSSWSV…ATNKLTFLNS (63 aa)) the chain is on the vacuolar side. Residues 535-554 (FKMKMSVVLGIIHMTFGVAL) traverse the membrane as a helical segment. At 555 to 572 (SLLNHIYFKKPLNIYLGF) the chain is on the cytoplasmic side. Residues 573 to 593 (IPEMIFMTTLFGYLVILIIYK) traverse the membrane as a helical segment. Topologically, residues 594 to 638 (WCAYDASTSMVAPSLLIHFINMFLFSYQDTSLPMLYKGQMGLQCF) are vacuolar. A helical transmembrane segment spans residues 639–658 (LVVCAIICVPWMLVVKPLIL). Residues 659 to 724 (RRQYLRRKHL…DTVVHQAIHT (66 aa)) are Cytoplasmic-facing. Residues 725-749 (IEYCLGCISNTASYLRLWALSLAHA) traverse the membrane as a helical segment. The Vacuolar segment spans residues 750-770 (QLSEVLWTMVMHVGLSIRSLG). Residues 771 to 809 (GGIALVFVFSAFATLTIAILLIMEGLSAFLHALRLHWVE) form a helical membrane-spanning segment. Residues 810–837 (FQNKFYMGTGFKFLPFSFENIREGKFDE) lie on the Cytoplasmic side of the membrane.

It belongs to the V-ATPase 116 kDa subunit family. As to quaternary structure, V-ATPase is a heteromultimeric enzyme made up of two complexes: the ATP-hydrolytic V1 complex and the proton translocation V0 complex. The V1 complex consists of three catalytic AB heterodimers that form a heterohexamer, three peripheral stalks each consisting of EG heterodimers, one central rotor including subunits D and F, and the regulatory subunits C and H. The proton translocation complex V0 consists of the proton transport subunit a, a ring of proteolipid subunits c9c'', rotary subunit d, subunits e and f, and two accessory subunits.

The protein localises to the cytoplasmic vesicle. It is found in the clathrin-coated vesicle membrane. It localises to the secretory vesicle. Its subcellular location is the synaptic vesicle membrane. The protein resides in the melanosome. Its function is as follows. Subunit of the V0 complex of vacuolar(H+)-ATPase (V-ATPase), a multisubunit enzyme composed of a peripheral complex (V1) that hydrolyzes ATP and a membrane integral complex (V0) that translocates protons. V-ATPase is responsible for acidifying and maintaining the pH of intracellular compartments and in some cell types, is targeted to the plasma membrane, where it is responsible for acidifying the extracellular environment. Required for assembly and activity of the vacuolar ATPase. In Xenopus tropicalis (Western clawed frog), this protein is V-type proton ATPase 116 kDa subunit a 1 (atp6v0a1).